The sequence spans 160 residues: Cytochrome b6-f complex subunit 4 (160 aa).

The next 3 membrane-spanning stretches (helical) occupy residues 36–56 (LLYIFPVVILGTIACNVGLAV), 95–115 (LLGVLLMVSVPTGLLTVPFLE), and 131–151 (TVFLIGTAVALWLGIGATLPI).

Belongs to the cytochrome b family. PetD subfamily. As to quaternary structure, the 4 large subunits of the cytochrome b6-f complex are cytochrome b6, subunit IV (17 kDa polypeptide, petD), cytochrome f and the Rieske protein, while the 4 small subunits are petG, petL, petM and petN. The complex functions as a dimer.

Its subcellular location is the plastid. The protein resides in the chloroplast thylakoid membrane. Component of the cytochrome b6-f complex, which mediates electron transfer between photosystem II (PSII) and photosystem I (PSI), cyclic electron flow around PSI, and state transitions. In Oryza nivara (Indian wild rice), this protein is Cytochrome b6-f complex subunit 4.